A 654-amino-acid polypeptide reads, in one-letter code: Myrosinase-binding protein 2 (654 aa).

4 Jacalin-type lectin domains span residues S2–A151, L156–P291, P346–P489, and A502–P645. Pro residues predominate over residues V314–P346. The interval V314–N355 is disordered.

The protein belongs to the jacalin lectin family. In terms of tissue distribution, expressed in flowers. Detected mainly in ovules and styles of immature flowers, but also in pistils, styles, stamens, petals and embryos. Not detected in leaves.

In Arabidopsis thaliana (Mouse-ear cress), this protein is Myrosinase-binding protein 2 (MBP2).